Here is a 339-residue protein sequence, read N- to C-terminus: Uroporphyrinogen decarboxylase (339 aa).

Substrate-binding positions include 21-25, Asp-71, Tyr-147, Ser-202, and His-315; that span reads RQAGR.

It belongs to the uroporphyrinogen decarboxylase family. In terms of assembly, homodimer.

Its subcellular location is the cytoplasm. It carries out the reaction uroporphyrinogen III + 4 H(+) = coproporphyrinogen III + 4 CO2. It functions in the pathway porphyrin-containing compound metabolism; protoporphyrin-IX biosynthesis; coproporphyrinogen-III from 5-aminolevulinate: step 4/4. Its function is as follows. Catalyzes the decarboxylation of four acetate groups of uroporphyrinogen-III to yield coproporphyrinogen-III. The polypeptide is Uroporphyrinogen decarboxylase (Helicobacter pylori (strain HPAG1)).